The chain runs to 313 residues: MSDVPEDANAGCPGTGSAGAGKASGCAGCPNQGACATGQGPPPDADVPKIQDRFSRIKHKILILSGKGGVGKSTLTSNLARALASDPSKQVAILDVDICGPSQPRMMGVEDEEVHNSADGWTPVGIQPNLTLMSIAFLIGDKNDAVIWRGARKNGMIKQFLKDVDWGEVDYLLIDTPPGTSDEHISLVQFLLQAGPLDGALIVSTPQEVSLLDVRKEVSFCIKTKVPILGVVENMARFVCPNCAHTTLLFPTSTGGAEKMCEDSNLELLAQLPLEPALAEALDNGEDFFETNPDSTLAKSFMDLAEKVKAKLH.

The tract at residues 1 to 25 (MSDVPEDANAGCPGTGSAGAGKASG) is disordered. [4Fe-4S] cluster is bound by residues cysteine 12, cysteine 26, cysteine 29, and cysteine 35. 66 to 73 (GKGGVGKS) is an ATP binding site. [4Fe-4S] cluster is bound by residues cysteine 240 and cysteine 243.

This sequence belongs to the Mrp/NBP35 ATP-binding proteins family. NUBP1/NBP35 subfamily. As to quaternary structure, heterotetramer of 2 NUBP1 and 2 NUBP2 chains. The cofactor is [4Fe-4S] cluster.

Its subcellular location is the cytoplasm. The protein resides in the cell projection. Functionally, component of the cytosolic iron-sulfur (Fe/S) protein assembly (CIA) machinery. Required for maturation of extramitochondrial Fe-S proteins. The NUBP1-NUBP2 heterotetramer forms a Fe-S scaffold complex, mediating the de novo assembly of an Fe-S cluster and its transfer to target apoproteins. Regulates cilium formation and structure. This Caenorhabditis briggsae protein is Cytosolic Fe-S cluster assembly factor NUBP1 homolog.